A 162-amino-acid polypeptide reads, in one-letter code: Larval cuticle protein F1 (162 aa).

4 consecutive repeat copies span residues 27–30 (AAPV), 43–46 (AAPV), 59–62 (AAPV), and 75–78 (AAPA).

Functionally, component of the larval cuticle. This Tenebrio molitor (Yellow mealworm beetle) protein is Larval cuticle protein F1.